Here is a 256-residue protein sequence, read N- to C-terminus: Stanniocalcin (256 aa).

An N-terminal signal peptide occupies residues 1–18 (MLAKFGLCAVFLVLGTAA). A propeptide spanning residues 19-33 (TFDTDPEEASPRRAR) is cleaved from the precursor. N-linked (GlcNAc...) asparagine glycosylation occurs at Asn62.

The protein belongs to the stanniocalcin family. In terms of assembly, homodimer; disulfide-linked. As to expression, produced and secreted by the corpuscles of Stannius.

The protein resides in the secreted. Its function is as follows. Its primary function is the prevention of hypercalcemia. Upon release into the circulation, it lowers calcium transport by the gills, thereby reducing its rate of influx from the environment into the extracellular compartment. STC also stimulates phosphate reabsorption by renal proximal tubules. The consequence of this action is increased levels of plasma phosphate, which combines with excess calcium and promotes its disposal into bone and scales. The protein is Stanniocalcin (stc) of Oncorhynchus kisutch (Coho salmon).